Reading from the N-terminus, the 727-residue chain is Pentatricopeptide repeat-containing protein At4g20740 (727 aa).

Positions 1 to 84 (MKSPKPPNLS…PSPPSHSTVI (84 aa)) are disordered. The segment covering 38-56 (SNRQSIPRVSPQPQSNSLA) has biased composition (polar residues). Residues 59–70 (TPFDLRKWDPET) are compositionally biased toward basic and acidic residues. PPR repeat units lie at residues 157–191 (DFAA…GRPP), 192–226 (SEKQ…GFKP), 227–261 (RVFL…GLVE), 262–296 (ESTT…LCKP), 297–331 (DVFA…EIKP), 332–366 (DVMA…QILI), 367–401 (DREI…GYIA), 402–436 (DIGI…ELEP), 437–471 (DFET…GYPV), 506–540 (SVSV…GFEP), 541–575 (DSSS…SCVP), 576–606 (SIAA…CLGN), 612–646 (MEFK…GVFI), and 647–681 (NEVI…KVMT).

This sequence belongs to the PPR family. P subfamily.

This chain is Pentatricopeptide repeat-containing protein At4g20740, found in Arabidopsis thaliana (Mouse-ear cress).